Here is a 528-residue protein sequence, read N- to C-terminus: GMP synthase [glutamine-hydrolyzing] (528 aa).

One can recognise a Glutamine amidotransferase type-1 domain in the interval 13–204 (AIVILDFGSQ…VNHICGCEQD (192 aa)). The active-site Nucleophile is cysteine 90. Active-site residues include histidine 178 and glutamate 180. One can recognise a GMPS ATP-PPase domain in the interval 205–403 (WTTNAFIDEA…LGLPEEIVRR (199 aa)). 232–238 (SGGVDSS) contributes to the ATP binding site.

Homodimer.

It carries out the reaction XMP + L-glutamine + ATP + H2O = GMP + L-glutamate + AMP + diphosphate + 2 H(+). It functions in the pathway purine metabolism; GMP biosynthesis; GMP from XMP (L-Gln route): step 1/1. Functionally, catalyzes the synthesis of GMP from XMP. The polypeptide is GMP synthase [glutamine-hydrolyzing] (Synechococcus sp. (strain CC9902)).